A 334-amino-acid chain; its full sequence is L-lactate dehydrogenase B chain (334 aa).

Ala-2 bears the N-acetylalanine mark. Lys-7 bears the N6-acetyllysine mark. NAD(+)-binding positions include 30–58 (GQVG…LEDK) and Arg-100. Ser-44 carries the phosphoserine modification. Lys-58 is modified (N6-acetyllysine). Arg-107 provides a ligand contact to substrate. Lys-119 is subject to N6-acetyllysine. Residue Asn-139 coordinates NAD(+). Residues Asn-139 and Arg-170 each coordinate substrate. His-194 (proton acceptor) is an active-site residue. Position 240 is a phosphotyrosine (Tyr-240). Thr-249 serves as a coordination point for substrate. Lys-329 is subject to N6-acetyllysine.

The protein belongs to the LDH/MDH superfamily. LDH family. As to quaternary structure, homotetramer. Interacts with PTEN upstream reading frame protein MP31; the interaction leads to inhibition of mitochondrial lactate dehydrogenase activity, preventing conversion of lactate to pyruvate in mitochondria.

The protein localises to the cytoplasm. It localises to the mitochondrion inner membrane. The enzyme catalyses (S)-lactate + NAD(+) = pyruvate + NADH + H(+). It functions in the pathway fermentation; pyruvate fermentation to lactate; (S)-lactate from pyruvate: step 1/1. In terms of biological role, interconverts simultaneously and stereospecifically pyruvate and lactate with concomitant interconversion of NADH and NAD(+). The polypeptide is L-lactate dehydrogenase B chain (LDHB) (Sus scrofa (Pig)).